The chain runs to 215 residues: HTH-type transcriptional repressor FabR (215 aa).

The 61-residue stretch at Lys10–Leu70 folds into the HTH tetR-type domain. The segment at residues Ser33–Phe52 is a DNA-binding region (H-T-H motif).

Homodimer.

Its subcellular location is the cytoplasm. Functionally, represses the transcription of fabB, involved in unsaturated fatty acid (UFA) biosynthesis. By controlling UFA production, FabR directly influences the physical properties of the membrane bilayer. This chain is HTH-type transcriptional repressor FabR, found in Escherichia coli O9:H4 (strain HS).